Reading from the N-terminus, the 205-residue chain is Outer-membrane lipoprotein LolB (205 aa).

An N-terminal signal peptide occupies residues 1-17 (MFLRHVIVFSLIALLTG). Residue Cys-18 is the site of N-palmitoyl cysteine attachment. Cys-18 is lipidated: S-diacylglycerol cysteine.

Belongs to the LolB family. In terms of assembly, monomer.

It is found in the cell outer membrane. Functionally, plays a critical role in the incorporation of lipoproteins in the outer membrane after they are released by the LolA protein. This is Outer-membrane lipoprotein LolB from Pseudomonas syringae pv. syringae (strain B728a).